Consider the following 394-residue polypeptide: Xylose isomerase (394 aa).

Residues His-54 and Asp-57 contribute to the active site. Positions 180, 216, 219, 244, 254, 256, and 285 each coordinate Mg(2+). The tract at residues 370-394 is disordered; sequence VRTPRPAGDGPPAGRARLTVAPRKR. Residues 373 to 386 show a composition bias toward low complexity; that stretch reads PRPAGDGPPAGRAR.

This sequence belongs to the xylose isomerase family. As to quaternary structure, homotetramer. Mg(2+) is required as a cofactor.

Its subcellular location is the cytoplasm. The enzyme catalyses alpha-D-xylose = alpha-D-xylulofuranose. Involved in D-xylose catabolism. This is Xylose isomerase (xylA) from Streptomyces rochei (Streptomyces parvullus).